A 416-amino-acid chain; its full sequence is Trifolitoxin-processing protein TfxD (416 aa).

Transmembrane regions (helical) follow at residues 24–44, 48–68, 79–99, 114–134, 153–173, 176–196, 230–250, 255–275, 295–315, 322–342, and 372–392; these read MIPN…ALQV, VLIT…LICM, VFAA…ALIA, IAFI…AYCA, SSLI…FAGT, SIIS…LAYA, ASFI…VVAA, IAVF…LAIG, VLIA…VGLI, IFAL…CDGL, and VILA…ALVL.

Its subcellular location is the cell membrane. In terms of biological role, the actions of the proteins TfxB, TfxD and TfxF are implicated in the processing of the inactive trifolitoxin (TfxA) precursor into the active peptide. This is Trifolitoxin-processing protein TfxD (tfxD) from Rhizobium leguminosarum bv. trifolii.